The chain runs to 108 residues: uncharacterized protein (108 aa).

This is an uncharacterized protein from Saccharomyces cerevisiae (strain ATCC 204508 / S288c) (Baker's yeast).